Here is a 92-residue protein sequence, read N- to C-terminus: RIIa domain-containing protein 1 (92 aa).

The region spanning 43–77 (KEVELLISGFFREMFLKRPDNIPEFAADYFTDPRL) is the RIIa domain.

In Bos taurus (Bovine), this protein is RIIa domain-containing protein 1 (RIIAD1).